The chain runs to 102 residues: DET1- and DDB1-associated protein 1 (102 aa).

A2 carries the N-acetylalanine modification. S33 carries the post-translational modification Phosphoserine. Basic and acidic residues-rich tracts occupy residues 66–75 (KNAAKKRDQE) and 91–102 (ARTDSPDMHEDT). The interval 66–102 (KNAAKKRDQEQVELEGESSAPPRKVARTDSPDMHEDT) is disordered. S95 is subject to Phosphoserine.

This sequence belongs to the DDA1 family. Component of numerous DCX (DDB1-CUL4-X-box) E3 ubiquitin-protein ligase complexes which consist of a core of DDB1, cullin-4 (CUL4A or CUL4B), DDA1 and RBX1. Component of the DCX(DCAF15) complex, also named CLR4(DCAF15) complex, composed of DCAF15, DDB1, cullin-4 (CUL4A or CUL4B), DDA1 and RBX1. Part of the DDD core complex containing DET1, DDA1 and DDB1; the DDD core complex recruits a specific UBE2E enzyme, such as UBE2E1, UBE2E2 UBE2E3, to form specific DDD-E2 complexes.

It functions in the pathway protein modification; protein ubiquitination. In terms of biological role, functions as a component of numerous distinct DCX (DDB1-CUL4-X-box) E3 ubiquitin-protein ligase complexes which mediate the ubiquitination and subsequent proteasomal degradation of target proteins. In the DCX complexes, acts as a scaffolding subunit required to stabilize the complex. This Bos taurus (Bovine) protein is DET1- and DDB1-associated protein 1.